The primary structure comprises 413 residues: Serine/threonine transporter SstT (413 aa).

Helical transmembrane passes span 22–42 (GLLL…VLGF), 61–81 (AVAP…KQLG), 89–109 (IVVL…LFSF), 148–168 (ALFN…GIAL), 189–209 (IVHF…AETL), 224–244 (LVVL…ILVF), 305–325 (MAGA…TLGI), 337–357 (VVAS…LLLI), and 363–383 (LFGI…VIGV).

Belongs to the dicarboxylate/amino acid:cation symporter (DAACS) (TC 2.A.23) family.

It localises to the cell inner membrane. It catalyses the reaction L-serine(in) + Na(+)(in) = L-serine(out) + Na(+)(out). The catalysed reaction is L-threonine(in) + Na(+)(in) = L-threonine(out) + Na(+)(out). Its function is as follows. Involved in the import of serine and threonine into the cell, with the concomitant import of sodium (symport system). In Histophilus somni (strain 129Pt) (Haemophilus somnus), this protein is Serine/threonine transporter SstT.